The following is a 178-amino-acid chain: Large ribosomal subunit protein uL16 (178 aa).

The protein belongs to the universal ribosomal protein uL16 family.

This Pyrobaculum calidifontis (strain DSM 21063 / JCM 11548 / VA1) protein is Large ribosomal subunit protein uL16.